The chain runs to 371 residues: Gustatory receptor-like 65a (371 aa).

The Cytoplasmic segment spans residues 1-13 (MREVNLLNRFTRQ). Residues 14–34 (FLFLIVLVTQICGVATFVYNS) form a helical membrane-spanning segment. Residues 35 to 42 (KAQCFRQS) are Extracellular-facing. The chain crosses the membrane as a helical span at residues 43–63 (GFLRFYSSLVLIFLALFLIVT). Residues 64–72 (TSKMFHNLQ) lie on the Cytoplasmic side of the membrane. A helical membrane pass occupies residues 73-93 (AVWPYVVGSVIILVVRIHGLL). Over 94–126 (ESAEIVELLNQMLRIMRQVNLMARHPNLFRLKH) the chain is Extracellular. A helical membrane pass occupies residues 127 to 147 (LLLLLLALQNLLRSLNTIVGI). Residues 148–161 (SNHSAEAYDSFLNS) lie on the Cytoplasmic side of the membrane. Residues 162 to 182 (VILLIILAVLLSFLLQITINI) traverse the membrane as a helical segment. Residues 183–251 (CLFVVLIATY…FHITVRIIRH (69 aa)) lie on the Extracellular side of the membrane. The chain crosses the membrane as a helical span at residues 252–272 (FRFHWLCAIIYGLLPFFSLTA). The Cytoplasmic portion of the chain corresponds to 273-277 (KDQNG). Residues 278–298 (FNFLIISALNIIFQWTIFAIL) traverse the membrane as a helical segment. The Extracellular portion of the chain corresponds to 299-371 (SRESRITRSL…FVNRLEYLHI (73 aa)).

It is found in the cell membrane. This is Gustatory receptor-like 65a from Drosophila melanogaster (Fruit fly).